The following is a 503-amino-acid chain: METLETEKFFSDDKPLLKPISDHSEIKTKARRNAVVSVLIQPFQWLQMLSSRLNLSFVLGVVLVYGVNQGFSGSIFKVVTDYYWKDVQQVQPSVVQLYMGLYYIPWVMRPIWGLFTDVFPIKGYKRKPYFVVSGVLGLVSAIAIVVLGKLPAALALSCLLGVSAAMAIADVVIDACIATNSINIRSLAPDIQSLCMVCSSAGALVGYATSGVFVHQLGPQGALGVLAFSPATIVILGFFIYEKRSSTVPTQKTKKDTDGLGVAVKGMCKTVKYPEVWKPSLYMFISLALNISTHEGHFYWYTDPTAGPAFSQEFVGIIYAVGALASMFGVLIYHKKLKGYSFRNILFFAQLLYVFSGMLDLVFIKRWNLTLGIPDSLFVITEESFTKMISKIRWIPMVVLSTRLCPLGIEGTFFAFLMCIDSFGQLASKWGGGFVLHAFGVTRHDFGNLWLVILIRNILRLVTVCFVFLVPDSDHLDDLVPSDVLPKKQSEDDDDDDIKLLLL.

12 helical membrane-spanning segments follow: residues 56-76 (SFVLGVVLVYGVNQGFSGSIF), 101-121 (LYYIPWVMRPIWGLFTDVFPI), 128-148 (PYFVVSGVLGLVSAIAIVVLG), 153-173 (ALALSCLLGVSAAMAIADVVI), 194-214 (LCMVCSSAGALVGYATSGVFV), 221-241 (GALGVLAFSPATIVILGFFIY), 281-301 (LYMFISLALNISTHEGHFYWY), 314-334 (FVGIIYAVGALASMFGVLIYH), 344-364 (NILFFAQLLYVFSGMLDLVFI), 369-389 (LTLGIPDSLFVITEESFTKMI), 404-424 (LCPLGIEGTFFAFLMCIDSFG), and 450-470 (WLVILIRNILRLVTVCFVFLV).

Belongs to the major facilitator superfamily. Folate-biopterin transporter (TC 2.A.71) family.

The protein resides in the membrane. In terms of biological role, could mediate folate transport. The protein is Probable folate-biopterin transporter 6 of Arabidopsis thaliana (Mouse-ear cress).